A 105-amino-acid polypeptide reads, in one-letter code: Chloroacetanilide N-alkylformylase 2, ferredoxin component (105 aa).

In terms of domain architecture, 2Fe-2S ferredoxin-type spans Pro2–Asp105. [2Fe-2S] cluster-binding residues include Cys40, Cys46, Cys49, and Cys86.

The protein belongs to the adrenodoxin/putidaredoxin family. In terms of assembly, the chloroacetanilide N-alkylformylase multicomponent enzyme system is composed of an oxygenase component (CndA) and an electron transfer component formed by a ferredoxin reductase (CndC1) and a ferredoxin (CndB1). In vitro, chloroacetanilide N-alkylformylase assays in which CndB1 is substituted for CndB2 demonstrate that the two enzymes possess nearly identical activities. [2Fe-2S] cluster serves as cofactor.

Its function is as follows. Component of the chloroacetanilide N-alkylformylase multicomponent enzyme system involved in the degradation of chloroacetanilide herbicides (N-alkoxyalkyl-N-chloroacetyl-substituted aniline derivatives). In vitro, functions as an intermediate electron transfer protein. The sequence is that of Chloroacetanilide N-alkylformylase 2, ferredoxin component from Rhizorhabdus wittichii (strain DC-6 / KACC 16600) (Sphingomonas wittichii).